A 491-amino-acid polypeptide reads, in one-letter code: Ketol-acid reductoisomerase (NADP(+)) (491 aa).

Residues 15–208 (AQLGKCRFMG…GGHRAGVLES (194 aa)) form the KARI N-terminal Rossmann domain. Residues 45 to 48 (CGAQ), Arg-68, Arg-76, Ser-78, and 108 to 110 (DKQ) each bind NADP(+). The active site involves His-132. Gly-158 is a binding site for NADP(+). 2 consecutive KARI C-terminal knotted domains span residues 209 to 344 (SFVA…TAPQ) and 345 to 484 (FEGK…MTDM). Mg(2+) is bound by residues Asp-217, Glu-221, Glu-389, and Glu-393. Ser-414 contributes to the substrate binding site.

The protein belongs to the ketol-acid reductoisomerase family. Mg(2+) is required as a cofactor.

The enzyme catalyses (2R)-2,3-dihydroxy-3-methylbutanoate + NADP(+) = (2S)-2-acetolactate + NADPH + H(+). The catalysed reaction is (2R,3R)-2,3-dihydroxy-3-methylpentanoate + NADP(+) = (S)-2-ethyl-2-hydroxy-3-oxobutanoate + NADPH + H(+). It functions in the pathway amino-acid biosynthesis; L-isoleucine biosynthesis; L-isoleucine from 2-oxobutanoate: step 2/4. Its pathway is amino-acid biosynthesis; L-valine biosynthesis; L-valine from pyruvate: step 2/4. Its function is as follows. Involved in the biosynthesis of branched-chain amino acids (BCAA). Catalyzes an alkyl-migration followed by a ketol-acid reduction of (S)-2-acetolactate (S2AL) to yield (R)-2,3-dihydroxy-isovalerate. In the isomerase reaction, S2AL is rearranged via a Mg-dependent methyl migration to produce 3-hydroxy-3-methyl-2-ketobutyrate (HMKB). In the reductase reaction, this 2-ketoacid undergoes a metal-dependent reduction by NADPH to yield (R)-2,3-dihydroxy-isovalerate. This is Ketol-acid reductoisomerase (NADP(+)) from Salmonella schwarzengrund (strain CVM19633).